Here is a 1004-residue protein sequence, read N- to C-terminus: 2-oxoglutarate dehydrogenase E1 component (1004 aa).

Belongs to the alpha-ketoglutarate dehydrogenase family. As to quaternary structure, homodimer. Part of the 2-oxoglutarate dehydrogenase (OGDH) complex composed of E1 (2-oxoglutarate dehydrogenase), E2 (dihydrolipoamide succinyltransferase) and E3 (dihydrolipoamide dehydrogenase); the complex contains multiple copies of the three enzymatic components (E1, E2 and E3). It depends on thiamine diphosphate as a cofactor.

The enzyme catalyses N(6)-[(R)-lipoyl]-L-lysyl-[protein] + 2-oxoglutarate + H(+) = N(6)-[(R)-S(8)-succinyldihydrolipoyl]-L-lysyl-[protein] + CO2. Its function is as follows. E1 component of the 2-oxoglutarate dehydrogenase (OGDH) complex which catalyzes the decarboxylation of 2-oxoglutarate, the first step in the conversion of 2-oxoglutarate to succinyl-CoA and CO(2). The sequence is that of 2-oxoglutarate dehydrogenase E1 component from Brucella suis biovar 1 (strain 1330).